We begin with the raw amino-acid sequence, 424 residues long: Serine--tRNA ligase (424 aa).

233-235 (TAE) lines the L-serine pocket. 264–266 (RRE) is an ATP binding site. An L-serine-binding site is contributed by Glu-287. Residue 351–354 (EISS) participates in ATP binding. L-serine is bound at residue Ser-387.

This sequence belongs to the class-II aminoacyl-tRNA synthetase family. Type-1 seryl-tRNA synthetase subfamily. Homodimer. The tRNA molecule binds across the dimer.

Its subcellular location is the cytoplasm. It catalyses the reaction tRNA(Ser) + L-serine + ATP = L-seryl-tRNA(Ser) + AMP + diphosphate + H(+). The catalysed reaction is tRNA(Sec) + L-serine + ATP = L-seryl-tRNA(Sec) + AMP + diphosphate + H(+). It functions in the pathway aminoacyl-tRNA biosynthesis; selenocysteinyl-tRNA(Sec) biosynthesis; L-seryl-tRNA(Sec) from L-serine and tRNA(Sec): step 1/1. In terms of biological role, catalyzes the attachment of serine to tRNA(Ser). Is also able to aminoacylate tRNA(Sec) with serine, to form the misacylated tRNA L-seryl-tRNA(Sec), which will be further converted into selenocysteinyl-tRNA(Sec). In Acaryochloris marina (strain MBIC 11017), this protein is Serine--tRNA ligase.